A 559-amino-acid chain; its full sequence is Oxygen-dependent choline dehydrogenase (559 aa).

Residue 4–33 participates in FAD binding; sequence DYIIIGAGSAGNVLATRLTEESDVSVLLLE. Positions 182–201 are disordered; the sequence is EGFGPMDRTVTPKGRRASTA. The active-site Proton acceptor is the His471.

This sequence belongs to the GMC oxidoreductase family. It depends on FAD as a cofactor.

It catalyses the reaction choline + A = betaine aldehyde + AH2. The catalysed reaction is betaine aldehyde + NAD(+) + H2O = glycine betaine + NADH + 2 H(+). The protein operates within amine and polyamine biosynthesis; betaine biosynthesis via choline pathway; betaine aldehyde from choline (cytochrome c reductase route): step 1/1. In terms of biological role, involved in the biosynthesis of the osmoprotectant glycine betaine. Catalyzes the oxidation of choline to betaine aldehyde and betaine aldehyde to glycine betaine at the same rate. The chain is Oxygen-dependent choline dehydrogenase from Pectobacterium carotovorum subsp. carotovorum (strain PC1).